Consider the following 3434-residue polypeptide: Genome polyprotein (3434 aa).

The interaction with host EXOC1 stretch occupies residues 2–15; sequence SKKPGGPGKPRVVN. At 2–110 the chain is on the cytoplasmic side; sequence SKKPGGPGKP…KQKKRGGSET (109 aa). The interval 37-72 is hydrophobic; homodimerization of capsid protein C; that stretch reads LLDGRGPIRFVLALLAFFRFTALAPTKALMRRWKSV. The propeptide at 106 to 125 is ER anchor for the capsid protein C, removed in mature form by serine protease NS3; sequence GGSETSVLMLIFMLIGFAAA. A helical transmembrane segment spans residues 111–131; the sequence is SVLMLIFMLIGFAAALKLSTF. At 132 to 251 the chain is on the extracellular side; it reads QGKIMMTVNA…ATRYLTKTEN (120 aa). The N-linked (GlcNAc...) asparagine; by host glycan is linked to Asn-140. The chain crosses the membrane as a helical span at residues 252–272; that stretch reads WIIRNPGYALVAVVLGWMLGS. The Cytoplasmic portion of the chain corresponds to 273–277; that stretch reads NTGQK. A helical transmembrane segment spans residues 278-292; sequence VIFTVLLLLVAPAYS. Over 293–745 the chain is Extracellular; the sequence is FNCLGMSSRD…QVFGGAFRTL (453 aa). Intrachain disulfides connect Cys-295/Cys-322, Cys-352/Cys-408, Cys-352/Cys-413, Cys-366/Cys-397, Cys-384/Cys-408, and Cys-384/Cys-413. The segment at 390 to 403 is fusion peptide; that stretch reads DRGWGNGCGLFGKG. Asn-446 carries N-linked (GlcNAc...) asparagine; by host glycosylation. 2 disulfides stabilise this stretch: Cys-482–Cys-580 and Cys-597–Cys-628. The chain crosses the membrane as a helical span at residues 746–766; it reads FGGMSWISPGLLGALLLWMGV. The Cytoplasmic segment spans residues 767-772; sequence NARDKS. Residues 773 to 793 form a helical membrane-spanning segment; sequence IALAFLATGGVLLFLATNVHA. At 794 to 1218 the chain is on the extracellular side; that stretch reads DTGCAIDITR…AFAESNNGGD (425 aa). 2 disulfide bridges follow: Cys-797–Cys-808 and Cys-848–Cys-936. Residues Asn-923 and Asn-968 are each glycosylated (N-linked (GlcNAc...) asparagine; by host). Cystine bridges form between Cys-972–Cys-1016, Cys-1073–Cys-1122, Cys-1084–Cys-1105, and Cys-1106–Cys-1109. An N-linked (GlcNAc...) (high mannose) asparagine; by host glycan is attached at Asn-1000. Residues 1219–1239 traverse the membrane as a helical segment; it reads VIHLALIAVFKVQPAFLVASL. At 1240-1249 the chain is on the cytoplasmic side; sequence TRSRWTNQEN. A helical membrane pass occupies residues 1250-1270; sequence LVLVLGAAFFQMAASDLELTI. Topologically, residues 1271 to 1286 are lumenal; the sequence is PGLLNSAATAWMVLRA. A helical transmembrane segment spans residues 1287–1307; sequence MAFPSTSAIAMPMLAMLAPGM. Residue Arg-1308 is a topological domain, cytoplasmic. The helical transmembrane segment at 1309 to 1329 threads the bilayer; the sequence is MLHLDTYRIVLLLIGICSLLN. The Lumenal portion of the chain corresponds to 1330–1340; sequence ERRRSVEKKKG. A helical transmembrane segment spans residues 1341-1361; the sequence is AVLIGLALTSTGYFSPTIMAA. Residues 1362–1373 are Cytoplasmic-facing; sequence GLMICNPNKKRG. Residues 1374–1394 traverse the membrane as a helical segment; the sequence is WPATEVLTAVGLMFAIVGGLA. At 1395–1397 the chain is on the lumenal side; the sequence is ELD. Residues 1398–1418 traverse the membrane as a helical segment; that stretch reads IDSMSVPFTIAGLMLVSYVIS. The Cytoplasmic segment spans residues 1419–1475; sequence GKATDMWLERAADVSWEAGAAITGTSERLDVQLDDDGDFHLLNDPGVPWKIWVLRMT. Positions 1426–1465 are interacts with and activates NS3 protease; it reads LERAADVSWEAGAAITGTSERLDVQLDDDGDFHLLNDPGV. The segment at residues 1476–1496 is an intramembrane region (helical); the sequence is CLSVAAITPRAILPSAFGYWL. Residues 1497 to 2172 lie on the Cytoplasmic side of the membrane; the sequence is TLKYTKRGGV…RMALEELPDA (676 aa). The 178-residue stretch at 1504–1681 folds into the Peptidase S7 domain; the sequence is GGVFWDTPSP…ERVEEPVPEA (178 aa). Active-site charge relay system; for serine protease NS3 activity residues include His-1554, Asp-1578, and Ser-1638. The Helicase ATP-binding domain maps to 1684 to 1840; it reads PEMLKKRQLT…DTNSPVHDVS (157 aa). Positions 1688 to 1691 are important for RNA-binding; sequence KKRQ. 1697–1704 provides a ligand contact to ATP; it reads LHPGAGKT. A DEAH box motif is present at residues 1788–1791; sequence DEAH. One can recognise a Helicase C-terminal domain in the interval 1851–2016; it reads GFEWITDYAG…GLVAQLYGPE (166 aa). Position 1892 is an N6-acetyllysine; by host (Lys-1892). Residues 1958–1979 form a disordered region; that stretch reads AAQRRGRVGRNPSQIGDEYHYG. The segment at 2167-2171 is regulates the ATPase activity of NS3 helicase; it reads EELPD. Residues 2173–2193 traverse the membrane as a helical segment; it reads LETITLIAALGVMTAGFFLLM. The Lumenal segment spans residues 2194-2197; that stretch reads MQRK. The helical intramembrane region spans 2198–2218; sequence GIGKLGLGALVLVVATFFLWM. At 2219–2220 the chain is on the lumenal side; it reads SD. A helical membrane pass occupies residues 2221 to 2241; it reads VSGTKIAGVLLLALLMMVVLI. Topologically, residues 2242-2256 are cytoplasmic; sequence PEPEKQRSQTDNQLA. Residues 2257-2271 traverse the membrane as a helical segment; it reads VFLICVLLVVGLVAA. The Lumenal segment spans residues 2272-2309; sequence NEYGMLERTKTDIRNLFGKSLIEENEVHIPPFDFFTLD. An intramembrane region (helical) is located at residues 2310-2330; that stretch reads LKPATAWALYGGSTVVLTPLI. Residues 2331 to 2366 lie on the Lumenal side of the membrane; the sequence is KHLVTSQYVTTSLASINAQAGSLFTLPKGIPFTDFD. The chain crosses the membrane as a helical span at residues 2367–2394; it reads LSVALVFLGCWGQVTLTTLIMATILVTL. At 2395 to 2446 the chain is on the cytoplasmic side; it reads HYGYLLPGWQAEALRAAQKRTAAGIMKNAVVDGIVATDVPELERTTPQMQKR. A helical transmembrane segment spans residues 2447-2467; it reads LGQILLVLASVAAVCVNPRIT. Topologically, residues 2468–2498 are lumenal; the sequence is TIREAGILCTAAALTLWDNNASAAWNSTTAT. The chain crosses the membrane as a helical span at residues 2499 to 2519; that stretch reads GLCHVMRGSWIAGASIAWTLI. The Cytoplasmic portion of the chain corresponds to 2520–3434; that stretch reads KNAEKPAFKR…ETHVSEDRVL (915 aa). Residues 2530–2795 enclose the mRNA cap 0-1 NS5-type MT domain; sequence GRAGGRTLGE…DVNLGSGTRA (266 aa). Ser-2585 lines the S-adenosyl-L-methionine pocket. Position 2585 is a phosphoserine (Ser-2585). The active-site For 2'-O-MTase activity is the Lys-2590. 6 residues coordinate S-adenosyl-L-methionine: Gly-2615, Trp-2616, Thr-2633, Lys-2634, Asp-2660, and Val-2661. The active-site For 2'-O-MTase activity is Asp-2675. Residue Ile-2676 coordinates S-adenosyl-L-methionine. Residues Lys-2711 and Glu-2747 each act as for 2'-O-MTase activity in the active site. Tyr-2749 lines the S-adenosyl-L-methionine pocket. Residues Glu-2969, His-2973, Cys-2978, and Cys-2981 each coordinate Zn(2+). The 153-residue stretch at 3059–3211 folds into the RdRp catalytic domain; that stretch reads GKIYADDTAG…KPLDDRFSTA (153 aa). Zn(2+)-binding residues include His-3246, Cys-3262, and Cys-3381.

This sequence in the N-terminal section; belongs to the class I-like SAM-binding methyltransferase superfamily. mRNA cap 0-1 NS5-type methyltransferase family. In terms of assembly, homodimer. Interacts (via N-terminus) with host EXOC1 (via C-terminus); this interaction results in EXOC1 degradation through the proteasome degradation pathway. As to quaternary structure, forms heterodimers with envelope protein E in the endoplasmic reticulum and Golgi. Homodimer; in the endoplasmic reticulum and Golgi. Interacts with protein prM. Interacts with non-structural protein 1. In terms of assembly, homodimer; Homohexamer when secreted. Interacts with envelope protein E. NS1 interacts with NS4B. Interacts with host complement protein CFH; this interaction leads to the degradation of C3. As to quaternary structure, interacts (via N-terminus) with serine protease NS3. Forms a heterodimer with serine protease NS3. May form homooligomers. In terms of assembly, forms a heterodimer with NS2B. Interacts with non-structural protein 2A (via N-terminus). Interacts with NS4B. Interacts with unphosphorylated RNA-directed RNA polymerase NS5; this interaction stimulates RNA-directed RNA polymerase NS5 guanylyltransferase activity. As to quaternary structure, interacts with serine protease NS3. Homodimer. Interacts with host STAT2; this interaction inhibits the phosphorylation of the latter, and, when all viral proteins are present (polyprotein), targets STAT2 for degradation. Interacts with serine protease NS3. Specific enzymatic cleavages in vivo yield mature proteins. Cleavages in the lumen of endoplasmic reticulum are performed by host signal peptidase, whereas cleavages in the cytoplasmic side are performed by serine protease NS3. Signal cleavage at the 2K-4B site requires a prior NS3 protease-mediated cleavage at the 4A-2K site. In terms of processing, cleaved in post-Golgi vesicles by a host furin, releasing the mature small envelope protein M, and peptide pr. This cleavage is incomplete as up to 30% of viral particles still carry uncleaved prM. Post-translationally, N-glycosylated. N-glycosylated. The excreted form is glycosylated and this is required for efficient secretion of the protein from infected cells. In terms of processing, acetylated by host KAT5. Acetylation modulates NS3 RNA-binding and unwinding activities and plays an important positive role for viral replication. Post-translationally, phosphorylated on serines residues. This phosphorylation may trigger NS5 nuclear localization.

The protein localises to the virion. It is found in the host nucleus. The protein resides in the host cytoplasm. It localises to the host perinuclear region. Its subcellular location is the secreted. The protein localises to the virion membrane. It is found in the host endoplasmic reticulum membrane. It carries out the reaction Selective hydrolysis of -Xaa-Xaa-|-Yaa- bonds in which each of the Xaa can be either Arg or Lys and Yaa can be either Ser or Ala.. The enzyme catalyses RNA(n) + a ribonucleoside 5'-triphosphate = RNA(n+1) + diphosphate. It catalyses the reaction a ribonucleoside 5'-triphosphate + H2O = a ribonucleoside 5'-diphosphate + phosphate + H(+). The catalysed reaction is ATP + H2O = ADP + phosphate + H(+). It carries out the reaction a 5'-end (5'-triphosphoguanosine)-ribonucleoside in mRNA + S-adenosyl-L-methionine = a 5'-end (N(7)-methyl 5'-triphosphoguanosine)-ribonucleoside in mRNA + S-adenosyl-L-homocysteine. The enzyme catalyses a 5'-end (N(7)-methyl 5'-triphosphoguanosine)-ribonucleoside in mRNA + S-adenosyl-L-methionine = a 5'-end (N(7)-methyl 5'-triphosphoguanosine)-(2'-O-methyl-ribonucleoside) in mRNA + S-adenosyl-L-homocysteine + H(+). In terms of biological role, plays a role in virus budding by binding to the cell membrane and gathering the viral RNA into a nucleocapsid that forms the core of a mature virus particle. During virus entry, may induce genome penetration into the host cytoplasm after hemifusion induced by the surface proteins. Can migrate to the cell nucleus where it modulates host functions. Overcomes the anti-viral effects of host EXOC1 by sequestering and degrading the latter through the proteasome degradation pathway. Its function is as follows. Inhibits RNA silencing by interfering with host Dicer. Prevents premature fusion activity of envelope proteins in trans-Golgi by binding to envelope protein E at pH6.0. After virion release in extracellular space, gets dissociated from E dimers. Functionally, acts as a chaperone for envelope protein E during intracellular virion assembly by masking and inactivating envelope protein E fusion peptide. prM is the only viral peptide matured by host furin in the trans-Golgi network probably to avoid catastrophic activation of the viral fusion activity in acidic Golgi compartment prior to virion release. prM-E cleavage is inefficient, and many virions are only partially matured. These uncleaved prM would play a role in immune evasion. In terms of biological role, may play a role in virus budding. Exerts cytotoxic effects by activating a mitochondrial apoptotic pathway through M ectodomain. May display a viroporin activity. Its function is as follows. Binds to host cell surface receptor and mediates fusion between viral and cellular membranes. Envelope protein is synthesized in the endoplasmic reticulum in the form of heterodimer with protein prM. They play a role in virion budding in the ER, and the newly formed immature particle is covered with 60 spikes composed of heterodimer between precursor prM and envelope protein E. The virion is transported to the Golgi apparatus where the low pH causes dissociation of PrM-E heterodimers and formation of E homodimers. prM-E cleavage is inefficient, and many virions are only partially matured. These uncleaved prM would play a role in immune evasion. Involved in immune evasion, pathogenesis and viral replication. Once cleaved off the polyprotein, is targeted to three destinations: the viral replication cycle, the plasma membrane and the extracellular compartment. Essential for viral replication. Required for formation of the replication complex and recruitment of other non-structural proteins to the ER-derived membrane structures. Excreted as a hexameric lipoparticle that plays a role against host immune response. Antagonizing the complement function. Binds to the host macrophages and dendritic cells. Inhibits signal transduction originating from Toll-like receptor 3 (TLR3). Functionally, component of the viral RNA replication complex that functions in virion assembly and antagonizes the host alpha/beta interferon antiviral response. In terms of biological role, required cofactor for the serine protease function of NS3. May have membrane-destabilizing activity and form viroporins. Its function is as follows. Displays three enzymatic activities: serine protease, NTPase and RNA helicase. NS3 serine protease, in association with NS2B, performs its autocleavage and cleaves the polyprotein at dibasic sites in the cytoplasm: C-prM, NS2A-NS2B, NS2B-NS3, NS3-NS4A, NS4A-2K and NS4B-NS5. NS3 RNA helicase binds RNA and unwinds dsRNA in the 3' to 5' direction. Regulates the ATPase activity of the NS3 helicase activity. NS4A allows NS3 helicase to conserve energy during unwinding. Functionally, functions as a signal peptide for NS4B and is required for the interferon antagonism activity of the latter. In terms of biological role, induces the formation of ER-derived membrane vesicles where the viral replication takes place. Inhibits interferon (IFN)-induced host STAT1 phosphorylation and nuclear translocation, thereby preventing the establishment of cellular antiviral state by blocking the IFN-alpha/beta pathway. Inhibits STAT2 translocation in the nucleus after IFN-alpha treatment. Its function is as follows. Replicates the viral (+) and (-) RNA genome, and performs the capping of genomes in the cytoplasm. NS5 methylates viral RNA cap at guanine N-7 and ribose 2'-O positions. Besides its role in RNA genome replication, also prevents the establishment of cellular antiviral state by blocking the interferon-alpha/beta (IFN-alpha/beta) signaling pathway. Inhibits host TYK2 and STAT2 phosphorylation, thereby preventing activation of JAK-STAT signaling pathway. This is Genome polyprotein from Culex annulirostris (Common banded mosquito).